Consider the following 428-residue polypeptide: C4-dicarboxylate transport protein (428 aa).

Transmembrane regions (helical) follow at residues 8 to 28, 44 to 64, 78 to 98, 148 to 168, 184 to 204, 222 to 242, 307 to 327, and 355 to 375; these read VLYV…HYYP, LIKM…IAGM, LLYF…ATHI, GEIL…AHLG, VLFG…FGAM, LIGT…GAIA, IYMT…LTWM, and AATL…ILGI.

Belongs to the dicarboxylate/amino acid:cation symporter (DAACS) (TC 2.A.23) family.

The protein localises to the cell inner membrane. Responsible for the transport of dicarboxylates such as succinate, fumarate, and malate from the periplasm across the membrane. This Burkholderia mallei (strain ATCC 23344) protein is C4-dicarboxylate transport protein.